A 355-amino-acid polypeptide reads, in one-letter code: S-adenosylmethionine:tRNA ribosyltransferase-isomerase (355 aa).

The protein belongs to the QueA family. Monomer.

The protein localises to the cytoplasm. The catalysed reaction is 7-aminomethyl-7-carbaguanosine(34) in tRNA + S-adenosyl-L-methionine = epoxyqueuosine(34) in tRNA + adenine + L-methionine + 2 H(+). The protein operates within tRNA modification; tRNA-queuosine biosynthesis. In terms of biological role, transfers and isomerizes the ribose moiety from AdoMet to the 7-aminomethyl group of 7-deazaguanine (preQ1-tRNA) to give epoxyqueuosine (oQ-tRNA). The chain is S-adenosylmethionine:tRNA ribosyltransferase-isomerase from Aeromonas salmonicida (strain A449).